A 31-amino-acid chain; its full sequence is Fibrinogen beta chain (31 aa).

Acidic residues predominate over residues 1–10 (HYYDDTDEEE). Residues 1-31 (HYYDDTDEEERIVSTVDARGHRPLDKKREEA) form a disordered region. Position 2 is a sulfotyrosine; partial (Y2). Residue Y3 is modified to Sulfotyrosine. Positions 18–31 (ARGHRPLDKKREEA) are enriched in basic and acidic residues.

In terms of assembly, heterohexamer; disulfide linked. Contains 2 sets of 3 non-identical chains (alpha, beta and gamma). The 2 heterotrimers are in head to head conformation with the N-termini in a small central domain. In terms of processing, conversion of fibrinogen to fibrin is triggered by thrombin, which cleaves fibrinopeptides A and B from alpha and beta chains, and thus exposes the N-terminal polymerization sites responsible for the formation of the soft clot.

The protein resides in the secreted. Functionally, cleaved by the protease thrombin to yield monomers which, together with fibrinogen alpha (FGA) and fibrinogen gamma (FGG), polymerize to form an insoluble fibrin matrix. Fibrin has a major function in hemostasis as one of the primary components of blood clots. In addition, functions during the early stages of wound repair to stabilize the lesion and guide cell migration during re-epithelialization. Was originally thought to be essential for platelet aggregation, based on in vitro studies using anticoagulated blood. However subsequent studies have shown that it is not absolutely required for thrombus formation in vivo. Enhances expression of SELP in activated platelets. Maternal fibrinogen is essential for successful pregnancy. Fibrin deposition is also associated with infection, where it protects against IFNG-mediated hemorrhage. May also facilitate the antibacterial immune response via both innate and T-cell mediated pathways. This Canis lupus familiaris (Dog) protein is Fibrinogen beta chain (FGB).